The chain runs to 476 residues: Aspartyl/glutamyl-tRNA(Asn/Gln) amidotransferase subunit B (476 aa).

The protein belongs to the GatB/GatE family. GatB subfamily. In terms of assembly, heterotrimer of A, B and C subunits.

It catalyses the reaction L-glutamyl-tRNA(Gln) + L-glutamine + ATP + H2O = L-glutaminyl-tRNA(Gln) + L-glutamate + ADP + phosphate + H(+). The catalysed reaction is L-aspartyl-tRNA(Asn) + L-glutamine + ATP + H2O = L-asparaginyl-tRNA(Asn) + L-glutamate + ADP + phosphate + 2 H(+). Allows the formation of correctly charged Asn-tRNA(Asn) or Gln-tRNA(Gln) through the transamidation of misacylated Asp-tRNA(Asn) or Glu-tRNA(Gln) in organisms which lack either or both of asparaginyl-tRNA or glutaminyl-tRNA synthetases. The reaction takes place in the presence of glutamine and ATP through an activated phospho-Asp-tRNA(Asn) or phospho-Glu-tRNA(Gln). The polypeptide is Aspartyl/glutamyl-tRNA(Asn/Gln) amidotransferase subunit B (Neisseria meningitidis serogroup B (strain ATCC BAA-335 / MC58)).